The chain runs to 174 residues: MATTFLRNLFSQAQPSLLRRPLMPSSSSILPAAARLFSSTPAQNATLNQVMRGCRKPQRARHAVSPALSSIKSPALKGVCVKVGITRPKKPNSGERKTARVRLSTGKVITAYIPGEGHNISQHSVVLVRGGRAQDCPGVRYHLVRGALDLAGVATRMSSRSKYGTKKPKKASVG.

The protein belongs to the universal ribosomal protein uS12 family. Component of the mitochondrial small ribosomal subunit (mt-SSU). Mature N.crassa 74S mitochondrial ribosomes consist of a small (37S) and a large (54S) subunit. The 37S small subunit contains a 16S ribosomal RNA (16S mt-rRNA) and 32 different proteins. The 54S large subunit contains a 23S rRNA (23S mt-rRNA) and 42 different proteins. uS12m forms part of the decoding center of the mt-SSU.

It is found in the mitochondrion. In terms of biological role, component of the mitochondrial ribosome (mitoribosome), a dedicated translation machinery responsible for the synthesis of mitochondrial genome-encoded proteins, including at least some of the essential transmembrane subunits of the mitochondrial respiratory chain. The mitoribosomes are attached to the mitochondrial inner membrane and translation products are cotranslationally integrated into the membrane. This chain is Small ribosomal subunit protein uS12m (mrps12), found in Neurospora crassa (strain ATCC 24698 / 74-OR23-1A / CBS 708.71 / DSM 1257 / FGSC 987).